The following is a 750-amino-acid chain: Catalase-peroxidase (750 aa).

The tryptophyl-tyrosyl-methioninium (Trp-Tyr) (with M-261) cross-link spans tryptophan 112–tyrosine 235. Histidine 113 serves as the catalytic Proton acceptor. The tryptophyl-tyrosyl-methioninium (Tyr-Met) (with W-112) cross-link spans tyrosine 235–methionine 261. Residue histidine 276 coordinates heme b.

The protein belongs to the peroxidase family. Peroxidase/catalase subfamily. As to quaternary structure, homodimer or homotetramer. Heme b serves as cofactor. Formation of the three residue Trp-Tyr-Met cross-link is important for the catalase, but not the peroxidase activity of the enzyme.

The enzyme catalyses H2O2 + AH2 = A + 2 H2O. It carries out the reaction 2 H2O2 = O2 + 2 H2O. Functionally, bifunctional enzyme with both catalase and broad-spectrum peroxidase activity. The protein is Catalase-peroxidase of Christiangramia forsetii (strain DSM 17595 / CGMCC 1.15422 / KT0803) (Gramella forsetii).